The following is a 117-amino-acid chain: Conotoxin vil14a (117 aa).

A signal peptide spans 1 to 22 (MGFRVLVLVVMATTSALPFTFS). A propeptide spanning residues 23–90 (EEPGRSPFRP…FAETPVGQKR (68 aa)) is cleaved from the precursor. The segment at 53 to 86 (RADGQPPDMRQPEMRRPEMRRPEVRQPEFAETPV) is disordered. The span at 62-80 (RQPEMRRPEMRRPEVRQPE) shows a compositional bias: basic and acidic residues. 2 disulfide bridges follow: Cys96–Cys116 and Cys100–Cys112.

This sequence belongs to the conotoxin R superfamily. In terms of tissue distribution, expressed by the venom duct.

The protein localises to the secreted. The polypeptide is Conotoxin vil14a (Conus villepinii (Villepin's cone)).